The primary structure comprises 156 residues: ATP synthase subunit b (156 aa).

The helical transmembrane segment at 7-26 threads the bilayer; that stretch reads FIGQMVAFAIFIYLTYRYVW.

It belongs to the ATPase B chain family. In terms of assembly, F-type ATPases have 2 components, F(1) - the catalytic core - and F(0) - the membrane proton channel. F(1) has five subunits: alpha(3), beta(3), gamma(1), delta(1), epsilon(1). F(0) has three main subunits: a(1), b(2) and c(10-14). The alpha and beta chains form an alternating ring which encloses part of the gamma chain. F(1) is attached to F(0) by a central stalk formed by the gamma and epsilon chains, while a peripheral stalk is formed by the delta and b chains.

The protein localises to the cell inner membrane. Functionally, f(1)F(0) ATP synthase produces ATP from ADP in the presence of a proton or sodium gradient. F-type ATPases consist of two structural domains, F(1) containing the extramembraneous catalytic core and F(0) containing the membrane proton channel, linked together by a central stalk and a peripheral stalk. During catalysis, ATP synthesis in the catalytic domain of F(1) is coupled via a rotary mechanism of the central stalk subunits to proton translocation. Component of the F(0) channel, it forms part of the peripheral stalk, linking F(1) to F(0). This chain is ATP synthase subunit b, found in Cellvibrio japonicus (strain Ueda107) (Pseudomonas fluorescens subsp. cellulosa).